A 1701-amino-acid chain; its full sequence is Coiled-coil domain-containing protein 180 (1701 aa).

Residues Met1–Pro35 form a disordered region. A coiled-coil region spans residues Gln171–Glu198. Disordered regions lie at residues Glu657–Glu808, His1272–Arg1291, and Gly1319–Lys1354. Positions Gln661 to Gln671 are enriched in basic residues. Residues Gly672–Glu682 are compositionally biased toward basic and acidic residues. Residues Ser683–Arg692 show a composition bias toward polar residues. A compositionally biased stretch (acidic residues) spans Glu696–Met705. Basic and acidic residues predominate over residues Glu755–Glu766. A coiled-coil region spans residues Val757 to Glu804. The span at Ser767–Glu808 shows a compositional bias: acidic residues.

The chain is Coiled-coil domain-containing protein 180 (CCDC180) from Homo sapiens (Human).